A 254-amino-acid polypeptide reads, in one-letter code: Cell division protein FtsQ (254 aa).

Topologically, residues 1–27 are cytoplasmic; sequence MNILKRKTPQNIRFGEQKPKYYFHIRA. A helical membrane pass occupies residues 28–48; sequence FAVLLGVFFLLGVYFNWQSIL. The Periplasmic portion of the chain corresponds to 49–254; it reads EKMDDKPISA…AGAAVGMVDR (206 aa). One can recognise a POTRA domain in the interval 54-124; it reads KPISAFALVG…NRLSIWVSEY (71 aa).

Belongs to the FtsQ/DivIB family. FtsQ subfamily. Part of a complex composed of FtsB, FtsL and FtsQ.

It localises to the cell inner membrane. Its function is as follows. Essential cell division protein. May link together the upstream cell division proteins, which are predominantly cytoplasmic, with the downstream cell division proteins, which are predominantly periplasmic. May control correct divisome assembly. This chain is Cell division protein FtsQ, found in Haemophilus influenzae (strain ATCC 51907 / DSM 11121 / KW20 / Rd).